Here is a 148-residue protein sequence, read N- to C-terminus: Calmodulin (148 aa).

At Ala-2 the chain carries N-acetylalanine. EF-hand domains are found at residues 8-43 (DQIS…LGQN), 44-79 (PTEA…KMKD), 81-116 (DSEE…LGEK), and 116-148 (KLTD…MMAK). Ca(2+) contacts are provided by Asp-21, Asp-23, Asp-25, Cys-27, Glu-32, Asp-57, Asp-59, Asn-61, Thr-63, Glu-68, Asp-94, Asp-96, Asn-98, and Glu-105. Lys-116 is subject to N6,N6,N6-trimethyllysine. The Ca(2+) site is built by Asp-129, Asp-131, Asp-133, Gln-135, and Glu-140.

The protein belongs to the calmodulin family.

Its function is as follows. Calmodulin mediates the control of a large number of enzymes, ion channels and other proteins by Ca(2+). Among the enzymes to be stimulated by the calmodulin-Ca(2+) complex are a number of protein kinases and phosphatases. This chain is Calmodulin (CAMF1), found in Fagus sylvatica (Beechnut).